The primary structure comprises 296 residues: Protein ea31 (296 aa).

The chain is Protein ea31 (ea31) from Escherichia phage lambda (Bacteriophage lambda).